The primary structure comprises 88 residues: Small ribosomal subunit protein bS20 (88 aa).

This sequence belongs to the bacterial ribosomal protein bS20 family.

Binds directly to 16S ribosomal RNA. The polypeptide is Small ribosomal subunit protein bS20 (Clostridioides difficile (strain 630) (Peptoclostridium difficile)).